Consider the following 192-residue polypeptide: Leucine-rich repeat-containing protein 51 (192 aa).

3 LRR repeats span residues 49-71 (SLTQ…NQVA), 80-101 (NLAW…LTTF), and 103-124 (NLSV…NKLA). An LRRCT domain is found at 137 to 175 (NPMEEEKGYRQYVLCTLPHITTFDFSGVTKADRTTAEVW).

It is found in the cytoplasm. This Macaca mulatta (Rhesus macaque) protein is Leucine-rich repeat-containing protein 51.